The sequence spans 180 residues: Large ribosomal subunit protein uL5 (180 aa).

The protein belongs to the universal ribosomal protein uL5 family. As to quaternary structure, part of the 50S ribosomal subunit; part of the 5S rRNA/L5/L18/L25 subcomplex. Contacts the 5S rRNA and the P site tRNA. Forms a bridge to the 30S subunit in the 70S ribosome.

In terms of biological role, this is one of the proteins that bind and probably mediate the attachment of the 5S RNA into the large ribosomal subunit, where it forms part of the central protuberance. In the 70S ribosome it contacts protein S13 of the 30S subunit (bridge B1b), connecting the 2 subunits; this bridge is implicated in subunit movement. Contacts the P site tRNA; the 5S rRNA and some of its associated proteins might help stabilize positioning of ribosome-bound tRNAs. This is Large ribosomal subunit protein uL5 from Rubrobacter xylanophilus (strain DSM 9941 / JCM 11954 / NBRC 16129 / PRD-1).